We begin with the raw amino-acid sequence, 206 residues long: Emopamil-binding protein-like (206 aa).

The next 4 helical transmembrane spans lie at 10 to 30, 42 to 62, 101 to 121, and 165 to 185; these read EAGGSLLLCAALLAAGCALGL, GALIWLCYDALVHFALEGPFV, VEILTVALDGSLALFLIYAIV, and CWLYLFFFNGVWVLIPGLLLW. The region spanning 39-184 is the EXPERA domain; that stretch reads ADRGALIWLC…VWVLIPGLLL (146 aa).

The protein belongs to the EBP family. In terms of assembly, homodimer. In terms of tissue distribution, widely expressed with highest levels in liver, lung and kidney.

The protein localises to the endoplasmic reticulum membrane. Does not possess sterol isomerase activity and does not bind sigma ligands. The polypeptide is Emopamil-binding protein-like (EBPL) (Homo sapiens (Human)).